We begin with the raw amino-acid sequence, 325 residues long: MELEFLGTGAGQPSKQRNVTSIALRLLDERNEVWLFDVGEATQHQLLKSNTRSRKVTKIFITHMHGDHIFGLPGFLTSRNFQGSELIDGGKPTDVTIYGPAGLQQYVFSVLRAAQVRLQYRINFIQVRPGIIFEDQQFAVSAFPMNHGIEDYAYRVVEKDTVGQLQVEKLLKLGLKSGPLFGKIKAGEIVKLENGLTINGKDFLGPDRPGRIIAIVLDTKDTPEIIKAAEQADVLVHEATYGAENSIMAKRHGHSTSLQAAEHARAAHAHQLILTHISARYLGKMADQLVKQAKNVFRPTYIAHDLEIFDIPAKKSERKDKIDVG.

7 residues coordinate Zn(2+): His63, His65, Asp67, His68, His147, Asp218, and His276. Asp67 acts as the Proton acceptor in catalysis.

It belongs to the RNase Z family. Homodimer. Zn(2+) serves as cofactor.

The catalysed reaction is Endonucleolytic cleavage of RNA, removing extra 3' nucleotides from tRNA precursor, generating 3' termini of tRNAs. A 3'-hydroxy group is left at the tRNA terminus and a 5'-phosphoryl group is left at the trailer molecule.. In terms of biological role, zinc phosphodiesterase, which displays some tRNA 3'-processing endonuclease activity. Probably involved in tRNA maturation, by removing a 3'-trailer from precursor tRNA. This chain is Ribonuclease Z, found in Oenococcus oeni (strain ATCC BAA-331 / PSU-1).